A 402-amino-acid polypeptide reads, in one-letter code: O-glucosyltransferase rumi homolog (402 aa).

Positions 1–20 are cleaved as a signal peptide; the sequence is MPYLEIVLALLVLSFQLGHS. 4 cysteine pairs are disulfide-bonded: cysteine 67-cysteine 74, cysteine 72-cysteine 375, cysteine 118-cysteine 124, and cysteine 279-cysteine 302. An N-linked (GlcNAc...) asparagine glycan is attached at asparagine 71. Aspartate 149 acts as the Proton donor/acceptor in catalysis. The interaction with the consensus sequence C-X-S-X-[PA]-C in peptide substrates stretch occupies residues 189–194; sequence AISLYP. UDP-alpha-D-glucose-binding positions include 226-230, arginine 234, 273-275, and 291-295; these read RGSRT, VRL, and AASFR.

This sequence belongs to the glycosyltransferase 90 family.

It localises to the endoplasmic reticulum lumen. It is found in the secreted. Its pathway is protein modification; protein glycosylation. Its function is as follows. Protein O-glucosyltransferase. Catalyzes the reaction that attaches glucose through an O-glycosidic linkage to a conserved serine residue found in the consensus sequence C-X-S-X-[PA]-C in epidermal growth factor-like repeats. Regulates Notch signaling by glucosylating Notch in the ER, glucosylation is required for the correct folding and cleavage of Notch. This is O-glucosyltransferase rumi homolog from Aedes aegypti (Yellowfever mosquito).